Consider the following 158-residue polypeptide: D-aminoacyl-tRNA deacylase (158 aa).

Positions 143–144 (GP) match the Gly-cisPro motif, important for rejection of L-amino acids motif.

This sequence belongs to the DTD family. As to quaternary structure, homodimer.

The protein localises to the cytoplasm. The catalysed reaction is glycyl-tRNA(Ala) + H2O = tRNA(Ala) + glycine + H(+). The enzyme catalyses a D-aminoacyl-tRNA + H2O = a tRNA + a D-alpha-amino acid + H(+). In terms of biological role, an aminoacyl-tRNA editing enzyme that deacylates mischarged D-aminoacyl-tRNAs. Also deacylates mischarged glycyl-tRNA(Ala), protecting cells against glycine mischarging by AlaRS. Acts via tRNA-based rather than protein-based catalysis; rejects L-amino acids rather than detecting D-amino acids in the active site. By recycling D-aminoacyl-tRNA to D-amino acids and free tRNA molecules, this enzyme counteracts the toxicity associated with the formation of D-aminoacyl-tRNA entities in vivo and helps enforce protein L-homochirality. This Solidesulfovibrio magneticus (strain ATCC 700980 / DSM 13731 / RS-1) (Desulfovibrio magneticus) protein is D-aminoacyl-tRNA deacylase.